The primary structure comprises 402 residues: Phosphoglycerate kinase (402 aa).

Residues 24–26 (DFN), Arg-40, 63–66 (HFGR), Arg-122, and Arg-155 contribute to the substrate site. ATP is bound by residues Lys-206, Gly-297, Glu-328, and 357–360 (GGDS).

This sequence belongs to the phosphoglycerate kinase family. In terms of assembly, monomer.

The protein resides in the cytoplasm. The enzyme catalyses (2R)-3-phosphoglycerate + ATP = (2R)-3-phospho-glyceroyl phosphate + ADP. It participates in carbohydrate degradation; glycolysis; pyruvate from D-glyceraldehyde 3-phosphate: step 2/5. This chain is Phosphoglycerate kinase, found in Synechococcus sp. (strain CC9311).